A 233-amino-acid polypeptide reads, in one-letter code: tRNA (guanine-N(7)-)-methyltransferase (233 aa).

The S-adenosyl-L-methionine site is built by Glu62, Glu87, Asp116, and Asp138. Asp138 is an active-site residue. Substrate is bound by residues Lys142, Asp174, and 212–215 (TRYE).

It belongs to the class I-like SAM-binding methyltransferase superfamily. TrmB family.

It carries out the reaction guanosine(46) in tRNA + S-adenosyl-L-methionine = N(7)-methylguanosine(46) in tRNA + S-adenosyl-L-homocysteine. It functions in the pathway tRNA modification; N(7)-methylguanine-tRNA biosynthesis. In terms of biological role, catalyzes the formation of N(7)-methylguanine at position 46 (m7G46) in tRNA. This Bartonella henselae (strain ATCC 49882 / DSM 28221 / CCUG 30454 / Houston 1) (Rochalimaea henselae) protein is tRNA (guanine-N(7)-)-methyltransferase.